Here is a 358-residue protein sequence, read N- to C-terminus: tRNA-specific 2-thiouridylase MnmA (358 aa).

ATP-binding positions include 6–13 (LVSGGVDS) and Ile-32. Positions 93 to 95 (NPD) are interaction with target base in tRNA. The active-site Nucleophile is the Cys-98. Cys-98 and Cys-193 form a disulfide bridge. Gly-121 is an ATP binding site. The interval 143-145 (KDQ) is interaction with tRNA. The active-site Cysteine persulfide intermediate is the Cys-193.

This sequence belongs to the MnmA/TRMU family.

The protein localises to the cytoplasm. The catalysed reaction is S-sulfanyl-L-cysteinyl-[protein] + uridine(34) in tRNA + AH2 + ATP = 2-thiouridine(34) in tRNA + L-cysteinyl-[protein] + A + AMP + diphosphate + H(+). Functionally, catalyzes the 2-thiolation of uridine at the wobble position (U34) of tRNA, leading to the formation of s(2)U34. This Parabacteroides distasonis (strain ATCC 8503 / DSM 20701 / CIP 104284 / JCM 5825 / NCTC 11152) protein is tRNA-specific 2-thiouridylase MnmA.